Reading from the N-terminus, the 435-residue chain is ATP-dependent protease ATPase subunit HslU (435 aa).

ATP-binding positions include Ile-18, 60–65 (GVGKTE), Asp-248, Glu-313, and Arg-385.

It belongs to the ClpX chaperone family. HslU subfamily. As to quaternary structure, a double ring-shaped homohexamer of HslV is capped on each side by a ring-shaped HslU homohexamer. The assembly of the HslU/HslV complex is dependent on binding of ATP.

Its subcellular location is the cytoplasm. In terms of biological role, ATPase subunit of a proteasome-like degradation complex; this subunit has chaperone activity. The binding of ATP and its subsequent hydrolysis by HslU are essential for unfolding of protein substrates subsequently hydrolyzed by HslV. HslU recognizes the N-terminal part of its protein substrates and unfolds these before they are guided to HslV for hydrolysis. This Roseobacter denitrificans (strain ATCC 33942 / OCh 114) (Erythrobacter sp. (strain OCh 114)) protein is ATP-dependent protease ATPase subunit HslU.